The chain runs to 151 residues: MTNLKAQKRLAASIAGVGINRIKVVEDYIEDVQSSLTRDEIRNLIKDGKIIVLKKVGISGGRLKERRKKRSLKSEGKKSGSRKGKKGARANSKQMWVKRVRKIRAYLKWLRDHKVIDRHTYRELYLKTKGGNYKGVSDVRNVLIQMGKIKG.

The segment at 62–93 (RLKERRKKRSLKSEGKKSGSRKGKKGARANSK) is disordered. The segment covering 79-88 (SGSRKGKKGA) has biased composition (basic residues).

It belongs to the eukaryotic ribosomal protein eL19 family. In terms of assembly, part of the 50S ribosomal subunit.

Binds to the 23S rRNA. The polypeptide is Large ribosomal subunit protein eL19 (Saccharolobus solfataricus (strain ATCC 35092 / DSM 1617 / JCM 11322 / P2) (Sulfolobus solfataricus)).